The following is a 159-amino-acid chain: Small ribosomal subunit protein uS7 (159 aa).

This sequence belongs to the universal ribosomal protein uS7 family. As to quaternary structure, part of the 30S ribosomal subunit. Contacts proteins S9 and S11.

In terms of biological role, one of the primary rRNA binding proteins, it binds directly to 16S rRNA where it nucleates assembly of the head domain of the 30S subunit. Is located at the subunit interface close to the decoding center, probably blocks exit of the E-site tRNA. This is Small ribosomal subunit protein uS7 from Wolbachia pipientis wMel.